Reading from the N-terminus, the 360-residue chain is Epoxyqueuosine reductase (360 aa).

D142 functions as the Proton donor in the catalytic mechanism. The 4Fe-4S ferredoxin-type domain maps to 187 to 216; the sequence is APTEPVTAHCGSCQACMDVCPTQAIVAPHR. [4Fe-4S] cluster contacts are provided by C196, C199, C202, C206, C222, C249, C252, and C256.

The protein belongs to the QueG family. As to quaternary structure, monomer. It depends on cob(II)alamin as a cofactor. Requires [4Fe-4S] cluster as cofactor.

The protein localises to the cytoplasm. It catalyses the reaction epoxyqueuosine(34) in tRNA + AH2 = queuosine(34) in tRNA + A + H2O. The protein operates within tRNA modification; tRNA-queuosine biosynthesis. Functionally, catalyzes the conversion of epoxyqueuosine (oQ) to queuosine (Q), which is a hypermodified base found in the wobble positions of tRNA(Asp), tRNA(Asn), tRNA(His) and tRNA(Tyr). The chain is Epoxyqueuosine reductase from Alicycliphilus denitrificans (strain DSM 14773 / CIP 107495 / K601).